We begin with the raw amino-acid sequence, 557 residues long: Dihydroxy-acid dehydratase (557 aa).

Residue aspartate 78 coordinates Mg(2+). Cysteine 119 lines the [2Fe-2S] cluster pocket. Aspartate 120 and lysine 121 together coordinate Mg(2+). Lysine 121 bears the N6-carboxylysine mark. Cysteine 192 contacts [2Fe-2S] cluster. Residue glutamate 446 participates in Mg(2+) binding. The active-site Proton acceptor is serine 472.

The protein belongs to the IlvD/Edd family. As to quaternary structure, homodimer. [2Fe-2S] cluster is required as a cofactor. The cofactor is Mg(2+).

The catalysed reaction is (2R)-2,3-dihydroxy-3-methylbutanoate = 3-methyl-2-oxobutanoate + H2O. It catalyses the reaction (2R,3R)-2,3-dihydroxy-3-methylpentanoate = (S)-3-methyl-2-oxopentanoate + H2O. It participates in amino-acid biosynthesis; L-isoleucine biosynthesis; L-isoleucine from 2-oxobutanoate: step 3/4. The protein operates within amino-acid biosynthesis; L-valine biosynthesis; L-valine from pyruvate: step 3/4. Functionally, functions in the biosynthesis of branched-chain amino acids. Catalyzes the dehydration of (2R,3R)-2,3-dihydroxy-3-methylpentanoate (2,3-dihydroxy-3-methylvalerate) into 2-oxo-3-methylpentanoate (2-oxo-3-methylvalerate) and of (2R)-2,3-dihydroxy-3-methylbutanoate (2,3-dihydroxyisovalerate) into 2-oxo-3-methylbutanoate (2-oxoisovalerate), the penultimate precursor to L-isoleucine and L-valine, respectively. In Campylobacter curvus (strain 525.92), this protein is Dihydroxy-acid dehydratase.